We begin with the raw amino-acid sequence, 224 residues long: Large ribosomal subunit protein uL4 (224 aa).

Residues 52–109 are disordered; it reads AAARQGTHSTKTRGDVSGGGRKPYRQKGTGRARQGSTRAPQFTGGGVVHGPKPRDYSQ.

It belongs to the universal ribosomal protein uL4 family. In terms of assembly, part of the 50S ribosomal subunit.

One of the primary rRNA binding proteins, this protein initially binds near the 5'-end of the 23S rRNA. It is important during the early stages of 50S assembly. It makes multiple contacts with different domains of the 23S rRNA in the assembled 50S subunit and ribosome. Its function is as follows. Forms part of the polypeptide exit tunnel. The sequence is that of Large ribosomal subunit protein uL4 from Mycobacterium marinum (strain ATCC BAA-535 / M).